Reading from the N-terminus, the 1035-residue chain is Putative protein FAM47C (1035 aa).

Disordered regions lie at residues 1-21 and 159-797; these read MGDQ…TPWY and LEDA…RRVS. The span at 159–173 shows a compositional bias: basic and acidic residues; the sequence is LEDAGSCEGQEKTTD. A compositionally biased stretch (pro residues) spans 380 to 392; it reads PEPPKTRVPPLRP. A compositionally biased stretch (basic and acidic residues) spans 478–490; sequence PPEKDVSHLRPEP. Polar residues predominate over residues 533 to 544; that stretch reads SLHQAPPESSVS. 3 stretches are compositionally biased toward basic and acidic residues: residues 611–622, 683–694, and 753–766; these read PETRVSHLRPEP and EPLE…RPEP.

It belongs to the FAM47 family.

In Homo sapiens (Human), this protein is Putative protein FAM47C (FAM47C).